The following is a 229-amino-acid chain: Large ribosomal subunit protein uL1 (229 aa).

This sequence belongs to the universal ribosomal protein uL1 family. As to quaternary structure, part of the 50S ribosomal subunit.

Its function is as follows. Binds directly to 23S rRNA. The L1 stalk is quite mobile in the ribosome, and is involved in E site tRNA release. Functionally, protein L1 is also a translational repressor protein, it controls the translation of the L11 operon by binding to its mRNA. The chain is Large ribosomal subunit protein uL1 from Pelagibacter ubique (strain HTCC1062).